A 316-amino-acid chain; its full sequence is Transaldolase A (316 aa).

Catalysis depends on lysine 131, which acts as the Schiff-base intermediate with substrate.

The protein belongs to the transaldolase family. Type 1 subfamily. In terms of assembly, homodimer.

It is found in the cytoplasm. It carries out the reaction D-sedoheptulose 7-phosphate + D-glyceraldehyde 3-phosphate = D-erythrose 4-phosphate + beta-D-fructose 6-phosphate. The protein operates within carbohydrate degradation; pentose phosphate pathway; D-glyceraldehyde 3-phosphate and beta-D-fructose 6-phosphate from D-ribose 5-phosphate and D-xylulose 5-phosphate (non-oxidative stage): step 2/3. Transaldolase is important for the balance of metabolites in the pentose-phosphate pathway. In Shigella flexneri, this protein is Transaldolase A.